A 478-amino-acid chain; its full sequence is Calcitonin receptor (478 aa).

Positions 1 to 22 are cleaved as a signal peptide; the sequence is MRFTFTRQFLAFFILISNPASI. Residues 23–146 lie on the Extracellular side of the membrane; sequence LPRSENLTFP…FTPEKLQNAY (124 aa). Asn28, Asn73, Asn125, and Asn130 each carry an N-linked (GlcNAc...) asparagine glycan. Cystine bridges form between Cys55/Cys81, Cys72/Cys112, and Cys95/Cys134. Residues 147–169 form a helical membrane-spanning segment; sequence VLYYLAIVGHSMSIITLVVSLGI. The Cytoplasmic segment spans residues 170–181; sequence FVYFRSLGCQRV. The chain crosses the membrane as a helical span at residues 182–202; that stretch reads TLHKNMFLTYILNSMIIIIHL. Residues 203–219 lie on the Extracellular side of the membrane; that stretch reads VEVVPNGELVRKDPVSC. Residues Cys219 and Cys289 are joined by a disulfide bond. A helical transmembrane segment spans residues 220 to 242; it reads KILHFFHQYMMACNYFWMLCEGI. Topologically, residues 243-259 are cytoplasmic; sequence YLHTLIVVSVFNEAKHL. A helical membrane pass occupies residues 260–280; that stretch reads RWYYLLGWGFPLVPTTIHAIT. Residues 281–296 lie on the Extracellular side of the membrane; the sequence is RALYFNDNCWISVDTH. The chain crosses the membrane as a helical span at residues 297 to 320; that stretch reads LLYIIHGPVMVALVVNFFFLLNIV. Over 321-340 the chain is Cytoplasmic; that stretch reads RVLVTKMRETHEAESYMYLK. Residues 341 to 359 traverse the membrane as a helical segment; the sequence is AVKATMILVPLLGIQFVVF. Residues 360 to 367 are Extracellular-facing; that stretch reads PWRPSNKV. The helical transmembrane segment at 368-394 threads the bilayer; it reads LGKIYDYFMHSLIHFQGFFVATIYCFC. The Cytoplasmic segment spans residues 395 to 478; that stretch reads NNEVQTTLKR…LNIIEKESSA (84 aa).

Belongs to the G-protein coupled receptor 2 family. In terms of assembly, heterodimer of CALCR and RAMP1, RAMP2 or RAMP3; the receptor complexes function as AMYR1, AMYR2 and AMYR3 receptors, respectively, and respond to amylin/IAPP, calcitonin/CT and CGRP1 ligands. Interacts with GPRASP2.

It is found in the cell membrane. G protein-coupled receptor activated by ligand peptides amylin (IAPP), calcitonin (CT/CALCA) and calcitonin gene-related peptide type 1 (CGRP1/CALCA). CALCR interacts with receptor-activity-modifying proteins RAMP1, 2 and 3 to form receptor complexes AMYR1, 2 and 3, respectively. IAPP, CT and CGRP1 activate CALCR and AMYRs with distinct modes of receptor activation resulting in specific phenotypes. Ligand binding causes a conformation change that triggers signaling via guanine nucleotide-binding proteins (G proteins) and modulates the activity of downstream effectors. Activates cAMP-dependent pathway. The protein is Calcitonin receptor of Cavia porcellus (Guinea pig).